A 1451-amino-acid polypeptide reads, in one-letter code: MALETEAKNSNATATGDATATKASSKAKENNNTAGGKKNLNPIPSQQNSNQNLVNGNGTAADGPAGKKKGKKNRNKSPPEPTTEAVLSNGHAEKSTAEYAAEDNADADANANVEKPEDGGAPDAEADGEDIDLDALQDVGITVNISSPGADVLCVQLSSMELVQEIHQLLMDREETCHRTCFSLQLDNATLDNFAELKAISNLEQGSTIKVVEEPYTMREARIHVRHVRDLLKNLDPADAYNGIDCTSLTYLNTITQGDLLDKKKTRPDSVDCTPPEYVTPGVSEPPLLPLHPNVKNAKGPQALKVLTTSAWNPPPGPRKLHGDLMYLYVVTMEEKRFHISACSKGFYINQSTDDTFNPKPDNPSHLSHSLIDLLSHISPSFRRAFQTIQKRRTMRHAFERVATPYQVYQWASPTLEHTVDAIRAEDAFSSKLGYEEHIPGQTRDWNEELQTTRELPRKTLPERLLRERAIFKVHGDFVTAATRGAMAVIDGNVLAINPGEDPKMQMFIWNNIFFSLGFDVRDHYKELGGDAAAFVAPRYDLHGVRVYNAVDVEGLYTLGTVVIDYRGYRVTAQSIIPGILEREQEQSVVYGSIDFGKTVLSHPKYLELLRQAGKHLKILPHAVLNERDEPVELCSSVECKGIIGNDGRHYILDLLRTFPPDVNFLKLQDVQLSKELVDMGFPIEHRHKLCCLRQELLEAFIEDRHVSFIRIAAVHLQQLNAKKQSEKTEGKPVPALEGADAASKVNGADKTDVKEEKNEENEEKAQSTTGESKTAEAMVNAIREAQSNVATSNEVQAAEVVKRACAAVGSLKEKEFDFRFNPDVFSPGIRHVDGEEGTCSSLAKQKVLVQEAAEFLVLKQIPAFIKEHMTHSSPPIDGQSLTESLHSHGINVRYLGKVIKILGQMPRMDYLHRIAVLELIVRATKHIYYTYMQNTEPLHLSAAISHFLNCLLTNGPVNPAVSSEEAHKKRGNGGKHNKHKSSKGGKGQQQQQTTGNQNGSSSGTSNGSSVSDWTLVTPRSLWQQIRKEAKVYWDWELDCDSIETAVSKYGILRISLLRAFCLKVGIQVLLREYNFESKHKPTFGDDDVVNVFPVVKHISPRATDAYNFYTTGQAKIQQGMFKEGYELISGALNLLNNVFGALHQENGSCLRMLARLSYLLGDAQDALAIQQRAVIMSERVNGMDHPSTILEYTHLSLYSFANGHVGMSLKLLYRARYLMVLICGEDHPEVALIDSNISLILHALGEYELSLRFIEHALKLNLKYFGDKAMPVALSYHLMARTQSCMGDFRSALNNEKETYSFYKSQLGENHEKTRDSAECLRLLTQQAVLLQRKMNDIYSSGKLTSDLPPIHITPPSMGSVLDMLNTINGILFVKISRKDIVKVRSEIEKHFKADSPENEVNDAINSIVAAANNNGEAEDADPKDVKEQAQAGTQLTNGEKAAATEATSS.

2 disordered regions span residues 1–101 (MALE…EYAA) and 264–286 (KKTRPDSVDCTPPEYVTPGVSEP). Low complexity predominate over residues 9-53 (NSNATATGDATATKASSKAKENNNTAGGKKNLNPIPSQQNSNQNL). Over residues 66-75 (GKKKGKKNRN) the composition is skewed to basic residues. Ser270 is modified (phosphoserine). In terms of domain architecture, Clu spans 424–666 (RAEDAFSSKL…RTFPPDVNFL (243 aa)). Disordered regions lie at residues 722 to 775 (AKKQ…ESKT), 961 to 1012 (AVSS…SSVS), and 1413 to 1451 (ANNNGEAEDADPKDVKEQAQAGTQLTNGEKAAATEATSS). Residues 748–758 (GADKTDVKEEK) are compositionally biased toward basic and acidic residues. Residues 969–984 (KKRGNGGKHNKHKSSK) show a composition bias toward basic residues. Residues 989-1010 (QQQQQTTGNQNGSSSGTSNGSS) show a composition bias toward low complexity.

This sequence belongs to the CLU family.

It is found in the cytoplasm. Its function is as follows. mRNA-binding protein involved in proper cytoplasmic distribution of mitochondria. The sequence is that of Protein clueless from Drosophila yakuba (Fruit fly).